The primary structure comprises 752 residues: Exocyst complex component EXO84B (752 aa).

Disordered regions lie at residues 511 to 532 and 724 to 752; these read QTGQRTDDLRRPLDRQNRNPEQ and TKGNNGDVHSPTASVSAQSVSSARSHGSY. Positions 515-532 are enriched in basic and acidic residues; the sequence is RTDDLRRPLDRQNRNPEQ. Low complexity predominate over residues 733–752; sequence SPTASVSAQSVSSARSHGSY.

The protein belongs to the EXO84 family. As to quaternary structure, the exocyst complex is composed of SEC3, SEC5, SEC6, SEC8, SEC10, EXO70A1 and EXO84B. Interacts with SEC6, SEC10, SEC15B and EXO70A1. Interacts with EXO70B1. Binds directly to B1L.

It localises to the cytoplasm. The protein localises to the cytosol. It is found in the perinuclear region. The protein resides in the cytoskeleton. Its subcellular location is the phragmoplast. It localises to the secreted. The protein localises to the cell wall. It is found in the cell membrane. Functionally, component of the exocyst complex involved in the docking of exocytic vesicles with fusion sites on the plasma membrane during regulated or polarized secretion. Involved in polarized cell growth and organ morphogenesis. During cytokinesis, involved in cell plate initiation, cell plate maturation and formation of new primary cell wall. Probable component of an exocyst subcomplex specifically involved in autophagy-related, Golgi-independent membrane traffic to the vacuole. Regulates autophagosome formation and autophagy-related Golgi-independent import into the vacuole. Mediates ABCG36/PEN3 outer-membrane polarity at the periphery of lateral root cap and root epidermal cells. In Arabidopsis thaliana (Mouse-ear cress), this protein is Exocyst complex component EXO84B.